Consider the following 124-residue polypeptide: Large ribosomal subunit protein bL12 (124 aa).

Belongs to the bacterial ribosomal protein bL12 family. In terms of assembly, homodimer. Part of the ribosomal stalk of the 50S ribosomal subunit. Forms a multimeric L10(L12)X complex, where L10 forms an elongated spine to which 2 to 4 L12 dimers bind in a sequential fashion. Binds GTP-bound translation factors.

Functionally, forms part of the ribosomal stalk which helps the ribosome interact with GTP-bound translation factors. Is thus essential for accurate translation. In Akkermansia muciniphila (strain ATCC BAA-835 / DSM 22959 / JCM 33894 / BCRC 81048 / CCUG 64013 / CIP 107961 / Muc), this protein is Large ribosomal subunit protein bL12.